The primary structure comprises 524 residues: Ribosomal protein uS12 methylthiotransferase RimO (524 aa).

Polar residues predominate over residues Asn-20–Ala-31. Positions Asn-20–Leu-59 are disordered. The segment covering Glu-48–Ser-58 has biased composition (low complexity). An MTTase N-terminal domain is found at Pro-67–Pro-177. Cys-76, Cys-112, Cys-141, Cys-216, Cys-220, and Cys-223 together coordinate [4Fe-4S] cluster. Residues Leu-202–Gln-443 enclose the Radical SAM core domain. Positions Gln-446–Ala-519 constitute a TRAM domain.

Belongs to the methylthiotransferase family. RimO subfamily. The cofactor is [4Fe-4S] cluster.

The protein localises to the cytoplasm. It carries out the reaction L-aspartate(89)-[ribosomal protein uS12]-hydrogen + (sulfur carrier)-SH + AH2 + 2 S-adenosyl-L-methionine = 3-methylsulfanyl-L-aspartate(89)-[ribosomal protein uS12]-hydrogen + (sulfur carrier)-H + 5'-deoxyadenosine + L-methionine + A + S-adenosyl-L-homocysteine + 2 H(+). Its function is as follows. Catalyzes the methylthiolation of an aspartic acid residue of ribosomal protein uS12. This Psychrobacter sp. (strain PRwf-1) protein is Ribosomal protein uS12 methylthiotransferase RimO.